The sequence spans 153 residues: Pheromone-binding protein Gp-9 (153 aa).

Positions 1–19 (MKTFVLHIFIFALVAFASA) are cleaved as a signal peptide. 3 disulfides stabilise this stretch: Cys37–Cys77, Cys73–Cys129, and Cys118–Cys138.

The protein belongs to the PBP/GOBP family. As to quaternary structure, homodimer.

It localises to the secreted. Functionally, colony queen number, a major feature of social organization, is associated with worker genotype for Gp-9. Colonies are headed by either a single reproductive queen (monogyne form) or multiple queens (polygyne form). Differences in worker Gp-9 genotypes between social forms may cause differences in workers' abilities to recognize queens and regulate their numbers. This Solenopsis pusillignis (Fire ant) protein is Pheromone-binding protein Gp-9.